A 201-amino-acid polypeptide reads, in one-letter code: Peptidyl-tRNA hydrolase (201 aa).

Tyr14 is a binding site for tRNA. The active-site Proton acceptor is the His19. TRNA contacts are provided by Phe64, Asn66, and Asn112.

The protein belongs to the PTH family. In terms of assembly, monomer.

It is found in the cytoplasm. It catalyses the reaction an N-acyl-L-alpha-aminoacyl-tRNA + H2O = an N-acyl-L-amino acid + a tRNA + H(+). Its function is as follows. Hydrolyzes ribosome-free peptidyl-tRNAs (with 1 or more amino acids incorporated), which drop off the ribosome during protein synthesis, or as a result of ribosome stalling. In terms of biological role, catalyzes the release of premature peptidyl moieties from peptidyl-tRNA molecules trapped in stalled 50S ribosomal subunits, and thus maintains levels of free tRNAs and 50S ribosomes. This chain is Peptidyl-tRNA hydrolase, found in Rhodopseudomonas palustris (strain BisA53).